We begin with the raw amino-acid sequence, 404 residues long: Voltage-gated potassium channel subunit beta-3 (404 aa).

Positions 1-14 (MQVSIACTEQNLRS) are enriched in polar residues. The tract at residues 1–78 (MQVSIACTEQ…RESTGRGTGM (78 aa)) is disordered. Residues 28-50 (PGGGNGGPVGGGHGNPPGGGGLG) are compositionally biased toward gly residues. NADP(+) contacts are provided by T97, W98, Q104, and D126. The active-site Proton donor/acceptor is the Y131. Residues N199, S229, R230, Q255, W284, S285, P286, L287, A288, C289, K295, K305, G364, S366, Q370, and E373 each contribute to the NADP(+) site.

The protein belongs to the shaker potassium channel beta subunit family. As to quaternary structure, forms heteromultimeric complex with alpha subunits. Interacts with KCNA5 and KCNB2. As to expression, predominantly expressed in brain. Strongest expression in olfactory bulb and thalamic nuclei. Not detected in heart, spleen, lung, liver, skeletal muscle, kidney and testis.

It is found in the cytoplasm. In terms of biological role, regulatory subunit of the voltage-gated potassium (Kv) channels composed of pore-forming and potassium-conducting alpha subunits and of regulatory beta subunits. The beta-3/KCNAB3 subunit may mediate closure of potassium channels. Inactivates Kv1.4/KCNA4 alpha subunit-containing Kv channel current but not Kv1.1/KCNA1 or Kv1.5/KCNA5 channels. May display nicotinamide adenine dinucleotide phosphate (NADPH)-dependent aldoketoreductase activity. The binding of oxidized and reduced NADP(H) cofactors may be required for the regulation of potassium channel activity. The protein is Voltage-gated potassium channel subunit beta-3 of Rattus norvegicus (Rat).